Consider the following 420-residue polypeptide: UDP-N-acetylmuramoylalanine--D-glutamate ligase (420 aa).

109–115 contributes to the ATP binding site; the sequence is GSAGKTT.

This sequence belongs to the MurCDEF family.

It localises to the cytoplasm. The enzyme catalyses UDP-N-acetyl-alpha-D-muramoyl-L-alanine + D-glutamate + ATP = UDP-N-acetyl-alpha-D-muramoyl-L-alanyl-D-glutamate + ADP + phosphate + H(+). It functions in the pathway cell wall biogenesis; peptidoglycan biosynthesis. Its function is as follows. Cell wall formation. Catalyzes the addition of glutamate to the nucleotide precursor UDP-N-acetylmuramoyl-L-alanine (UMA). This is UDP-N-acetylmuramoylalanine--D-glutamate ligase from Chlamydia abortus (strain DSM 27085 / S26/3) (Chlamydophila abortus).